Here is a 497-residue protein sequence, read N- to C-terminus: Gasdermin-E (497 aa).

The segment at 1–56 (MFAKATRSFLREVDAEGDLIAVSNLNDSDKSQLLSLVTKKKRFWCWQRPKYQFLSV) is membrane targeting domain. Position 45 is an S-(2-succinyl)cysteine (Cys-45). Residue Lys-120 forms a Glycyl lysine isopeptide (Lys-Gly) (interchain with G-Cter in ubiquitin) linkage. 3 positions are modified to S-(2-succinyl)cysteine: Cys-156, Cys-168, and Cys-180. Lys-189 participates in a covalent cross-link: Glycyl lysine isopeptide (Lys-Gly) (interchain with G-Cter in ubiquitin). Residues Cys-235, Cys-371, Cys-409, Cys-418, and Cys-491 each carry the S-(2-succinyl)cysteine modification.

This sequence belongs to the gasdermin family. Homooligomer; homooligomeric ring-shaped pore complex containing 27-28 subunits when inserted in the membrane. Cleavage at Asp-270 by CASP3 (mature and uncleaved precursor forms) or granzyme B (GZMB) relieves autoinhibition and is sufficient to initiate pyroptosis. In terms of processing, succination by the Krebs cycle intermediate fumarate, which leads to S-(2-succinyl)cysteine residues, inhibits processing by caspases, and ability to initiate pyroptosis. Succination modification is catalyzed by a non-enzymatic reaction caused by an accumulation of fumarate. Post-translationally, ubiquitinated on Lys-120 and Lys-189 via 'Lys-48'-linked polyubiquitin chains, leading to proteasomal degradation. Deubiquitinated by USP48, leading to increased stability. Palmitoylated.

It localises to the cell membrane. The protein localises to the cytoplasm. The protein resides in the cytosol. Its activity is regulated as follows. The full-length protein before cleavage is inactive: intramolecular interactions between N- and C-terminal domains mediate autoinhibition in the absence of activation signal. The intrinsic pyroptosis-inducing activity is carried by the released N-terminal moiety (Gasdermin-E, N-terminal) following cleavage by CASP3 or granzyme B (GZMB). Activated by NLRP1 in the absence of GSDMD expression: NLRP1 cleaves and activates CASP8, promoting downstream activation of CASP3 and subsequent activation of GSDME. In terms of biological role, precursor of a pore-forming protein that converts non-inflammatory apoptosis to pyroptosis. This form constitutes the precursor of the pore-forming protein: upon cleavage, the released N-terminal moiety (Gasdermin-E, N-terminal) binds to membranes and forms pores, triggering pyroptosis. Pore-forming protein produced by cleavage by CASP3 or granzyme B (GZMB), which converts non-inflammatory apoptosis to pyroptosis or promotes granzyme-mediated pyroptosis, respectively. After cleavage, moves to the plasma membrane, homooligomerizes within the membrane and forms pores of 10-15 nanometers (nm) of inner diameter, allowing the release of mature interleukins (IL1B and IL16) and triggering pyroptosis. Binds to inner leaflet lipids, bisphosphorylated phosphatidylinositols, such as phosphatidylinositol (4,5)-bisphosphate. Cleavage by CASP3 switches CASP3-mediated apoptosis induced by TNF or danger signals, such as chemotherapy drugs, to pyroptosis. Mediates secondary necrosis downstream of the mitochondrial apoptotic pathway and CASP3 activation as well as in response to viral agents. Exhibits bactericidal activity. Cleavage by GZMB promotes tumor suppressor activity by triggering robust anti-tumor immunity. Suppresses tumors by mediating granzyme-mediated pyroptosis in target cells of natural killer (NK) cells: cleavage by granzyme B (GZMB), delivered to target cells from NK-cells, triggers pyroptosis of tumor cells and tumor suppression. May play a role in the p53/TP53-regulated cellular response to DNA damage. The sequence is that of Gasdermin-E from Equus caballus (Horse).